Reading from the N-terminus, the 67-residue chain is Minor structural pilin EpdD (67 aa).

A propeptide spanning residues 1–13 (MSVALKKFFSKRG) is cleaved from the precursor. The QXSXEXXXL signature appears at 14–22 (QLSLEFSVL).

Post-translationally, the N-terminus is cleaved by the prepilin peptidase EppA, which recognizes the class III signal sequence. In terms of processing, N-glycosylated. Glycosylation is AglB-dependent. The N-glycosylation does not occur unless the signal peptide has been cleaved first.

The protein resides in the secreted. Its subcellular location is the cell surface. It localises to the fimbrium. Functionally, minor component of the type IV-like pili. Essential for pili formation. This is Minor structural pilin EpdD from Methanococcus maripaludis (strain DSM 14266 / JCM 13030 / NBRC 101832 / S2 / LL).